Here is a 322-residue protein sequence, read N- to C-terminus: Phosphatidylserine decarboxylase proenzyme (322 aa).

Catalysis depends on charge relay system; for autoendoproteolytic cleavage activity residues aspartate 90, histidine 147, and serine 254. The Schiff-base intermediate with substrate; via pyruvic acid; for decarboxylase activity role is filled by serine 254. Position 254 is a pyruvic acid (Ser); by autocatalysis (serine 254). The tract at residues 293-322 (PDAEPAPLPAEEIEAEHDASPLVDDKKDQV) is disordered. Residues 308–322 (EHDASPLVDDKKDQV) show a composition bias toward basic and acidic residues.

It belongs to the phosphatidylserine decarboxylase family. PSD-B subfamily. Prokaryotic type I sub-subfamily. In terms of assembly, heterodimer of a large membrane-associated beta subunit and a small pyruvoyl-containing alpha subunit. Pyruvate is required as a cofactor. In terms of processing, is synthesized initially as an inactive proenzyme. Formation of the active enzyme involves a self-maturation process in which the active site pyruvoyl group is generated from an internal serine residue via an autocatalytic post-translational modification. Two non-identical subunits are generated from the proenzyme in this reaction, and the pyruvate is formed at the N-terminus of the alpha chain, which is derived from the carboxyl end of the proenzyme. The autoendoproteolytic cleavage occurs by a canonical serine protease mechanism, in which the side chain hydroxyl group of the serine supplies its oxygen atom to form the C-terminus of the beta chain, while the remainder of the serine residue undergoes an oxidative deamination to produce ammonia and the pyruvoyl prosthetic group on the alpha chain. During this reaction, the Ser that is part of the protease active site of the proenzyme becomes the pyruvoyl prosthetic group, which constitutes an essential element of the active site of the mature decarboxylase.

Its subcellular location is the cell membrane. It catalyses the reaction a 1,2-diacyl-sn-glycero-3-phospho-L-serine + H(+) = a 1,2-diacyl-sn-glycero-3-phosphoethanolamine + CO2. The protein operates within phospholipid metabolism; phosphatidylethanolamine biosynthesis; phosphatidylethanolamine from CDP-diacylglycerol: step 2/2. Functionally, catalyzes the formation of phosphatidylethanolamine (PtdEtn) from phosphatidylserine (PtdSer). This is Phosphatidylserine decarboxylase proenzyme from Escherichia coli O139:H28 (strain E24377A / ETEC).